We begin with the raw amino-acid sequence, 211 residues long: Thiamine-phosphate synthase (211 aa).

Residues 39–43 (QLREK) and N71 each bind 4-amino-2-methyl-5-(diphosphooxymethyl)pyrimidine. Mg(2+) is bound by residues D72 and D91. Position 110 (S110) interacts with 4-amino-2-methyl-5-(diphosphooxymethyl)pyrimidine. 136–138 (TAT) is a 2-[(2R,5Z)-2-carboxy-4-methylthiazol-5(2H)-ylidene]ethyl phosphate binding site. K139 serves as a coordination point for 4-amino-2-methyl-5-(diphosphooxymethyl)pyrimidine. 2-[(2R,5Z)-2-carboxy-4-methylthiazol-5(2H)-ylidene]ethyl phosphate contacts are provided by residues A167 and 187–188 (VS).

This sequence belongs to the thiamine-phosphate synthase family. Mg(2+) is required as a cofactor.

It catalyses the reaction 2-[(2R,5Z)-2-carboxy-4-methylthiazol-5(2H)-ylidene]ethyl phosphate + 4-amino-2-methyl-5-(diphosphooxymethyl)pyrimidine + 2 H(+) = thiamine phosphate + CO2 + diphosphate. It carries out the reaction 2-(2-carboxy-4-methylthiazol-5-yl)ethyl phosphate + 4-amino-2-methyl-5-(diphosphooxymethyl)pyrimidine + 2 H(+) = thiamine phosphate + CO2 + diphosphate. The catalysed reaction is 4-methyl-5-(2-phosphooxyethyl)-thiazole + 4-amino-2-methyl-5-(diphosphooxymethyl)pyrimidine + H(+) = thiamine phosphate + diphosphate. The protein operates within cofactor biosynthesis; thiamine diphosphate biosynthesis; thiamine phosphate from 4-amino-2-methyl-5-diphosphomethylpyrimidine and 4-methyl-5-(2-phosphoethyl)-thiazole: step 1/1. In terms of biological role, condenses 4-methyl-5-(beta-hydroxyethyl)thiazole monophosphate (THZ-P) and 2-methyl-4-amino-5-hydroxymethyl pyrimidine pyrophosphate (HMP-PP) to form thiamine monophosphate (TMP). This Solidesulfovibrio magneticus (strain ATCC 700980 / DSM 13731 / RS-1) (Desulfovibrio magneticus) protein is Thiamine-phosphate synthase.